Reading from the N-terminus, the 301-residue chain is MKLDYNSREIFFGNEALIVADMTKGSNGKPEFTNHKIVTGLVSVGSMEDQAETNSYPADDVPDHGVKKGATLLQGEMVFIQTDQALKEDMLGQQRTENGLGWSPTGNWKTKCVQYLIKGRKRDKVTGEFVDGYRVVVYPHLTPTAEATKESETDSVDGVDPIQWTLAVQATESDIYSNGGKKVPAIEYEIWGEQAKDFAKKMESGLFIMQPDTVLAGAITLVAPVIPNVTTATKGNNDGTIVVPDTLKDSKGGTVKVTSVIKDAHGKVATNGQLAPGVYIVTFSADGYEDVTAGVSVTDHS.

Belongs to the skunalikevirus tail tube protein family. Homohexamer. Interacts with the tail terminator protein.

Its subcellular location is the virion. Forms the cylindrical rigid tail tube with a 4 nm wide central channel for DNA ejection. The tube is composed of 31 hexameric rings. This is Tail tube protein from Lactococcus phage p2 (Lactococcus lactis bacteriophage p2).